Consider the following 1040-residue polypeptide: Multidrug resistance protein MdtB (1040 aa).

12 helical membrane-spanning segments follow: residues leucine 25–alanine 45, leucine 347–alanine 367, isoleucine 369–leucine 389, leucine 396–isoleucine 416, isoleucine 440–phenylalanine 460, phenylalanine 472–proline 492, tryptophan 537–isoleucine 557, leucine 863–valine 883, phenylalanine 888–alanine 908, isoleucine 910–isoleucine 930, isoleucine 968–valine 988, and isoleucine 998–isoleucine 1018.

This sequence belongs to the resistance-nodulation-cell division (RND) (TC 2.A.6) family. MdtB subfamily. As to quaternary structure, part of a tripartite efflux system composed of MdtA, MdtB and MdtC. MdtB forms a heteromultimer with MdtC.

The protein resides in the cell inner membrane. This Salmonella paratyphi A (strain ATCC 9150 / SARB42) protein is Multidrug resistance protein MdtB.